We begin with the raw amino-acid sequence, 262 residues long: Small ribosomal subunit protein eS1 (262 aa).

Residues 1–18 (MAVGKNKRISKGKKGSKK) show a composition bias toward basic residues. The disordered stretch occupies residues 1-20 (MAVGKNKRISKGKKGSKKKT).

It belongs to the eukaryotic ribosomal protein eS1 family. Component of the small ribosomal subunit. Mature ribosomes consist of a small (40S) and a large (60S) subunit. The 40S subunit contains about 33 different proteins and 1 molecule of RNA (18S). The 60S subunit contains about 49 different proteins and 3 molecules of RNA (25S, 5.8S and 5S).

It localises to the cytoplasm. This Oryza sativa subsp. japonica (Rice) protein is Small ribosomal subunit protein eS1.